Consider the following 325-residue polypeptide: Tetraacyldisaccharide 4'-kinase (325 aa).

55–62 (TAGGNGKT) serves as a coordination point for ATP.

Belongs to the LpxK family.

It catalyses the reaction a lipid A disaccharide + ATP = a lipid IVA + ADP + H(+). Its pathway is glycolipid biosynthesis; lipid IV(A) biosynthesis; lipid IV(A) from (3R)-3-hydroxytetradecanoyl-[acyl-carrier-protein] and UDP-N-acetyl-alpha-D-glucosamine: step 6/6. Functionally, transfers the gamma-phosphate of ATP to the 4'-position of a tetraacyldisaccharide 1-phosphate intermediate (termed DS-1-P) to form tetraacyldisaccharide 1,4'-bis-phosphate (lipid IVA). The sequence is that of Tetraacyldisaccharide 4'-kinase from Salmonella choleraesuis (strain SC-B67).